Consider the following 512-residue polypeptide: Probable cobyric acid synthase (512 aa).

The 186-residue stretch at 275 to 460 (SVTVAVPHLP…LHGLFGNDAA (186 aa)) folds into the GATase cobBQ-type domain. C353 serves as the catalytic Nucleophile. H452 is a catalytic residue.

Belongs to the CobB/CobQ family. CobQ subfamily.

It functions in the pathway cofactor biosynthesis; adenosylcobalamin biosynthesis. In terms of biological role, catalyzes amidations at positions B, D, E, and G on adenosylcobyrinic A,C-diamide. NH(2) groups are provided by glutamine, and one molecule of ATP is hydrogenolyzed for each amidation. This Halobacterium salinarum (strain ATCC 29341 / DSM 671 / R1) protein is Probable cobyric acid synthase.